The sequence spans 150 residues: Large ribosomal subunit protein bL9 (150 aa).

The protein belongs to the bacterial ribosomal protein bL9 family.

Its function is as follows. Binds to the 23S rRNA. The protein is Large ribosomal subunit protein bL9 of Vibrio campbellii (strain ATCC BAA-1116).